A 347-amino-acid polypeptide reads, in one-letter code: Virulence plasmid protein pGP2-D (347 aa).

This is Virulence plasmid protein pGP2-D from Chlamydia psittaci (Chlamydophila psittaci).